The chain runs to 117 residues: Large ribosomal subunit protein bL20c (117 aa).

The protein belongs to the bacterial ribosomal protein bL20 family.

Its subcellular location is the plastid. The protein resides in the chloroplast. In terms of biological role, binds directly to 23S ribosomal RNA and is necessary for the in vitro assembly process of the 50S ribosomal subunit. It is not involved in the protein synthesizing functions of that subunit. The protein is Large ribosomal subunit protein bL20c of Populus alba (White poplar).